Consider the following 726-residue polypeptide: MSTSDDIHNTTATGKCPFHQGGHDQSAGAGTTTRDWWPNQLRVDLLNQHSNRSNPLGEDFDYRKEFSKLDYYGLKKDLKALLTESQPWWPADWGSYAGLFIRMAWHGAGTYRSIDGRGGAGRGQQRFAPLNSWPDNVSLDKARRLLWPIKQKYGQKISWADLFILAGNVALENSGFRTFGFGAGREDVWEPDLDVNWGDEKAWLTHRHPEALAKAPLGATEMGLIYVNPEGPDHSGEPLSAAAAIRATFGNMGMNDEETVALIAGGHTLGKTHGAGPTSNVGPDPEAAPIEEQGLGWASTYGSGVGADAITSGLEVVWTQTPTQWSNYFFENLFKYEWVQTRSPAGAIQFEAVDAPEIIPDPFDPSKKRKPTMLVTDLTLRFDPEFEKISRRFLNDPQAFNEAFARAWFKLTHRDMGPKSRYIGPEVPKEDLIWQDPLPQPIYNPTEQDIIDLKFAIADSGLSVSELVSVAWASASTFRGGDKRGGANGARLALMPQRDWDVNAAAVRALPVLEKIQKESGKASLADIIVLAGVVGVEKAASAAGLSIHVPFAPGRVDARQDQTDIEMFELLEPIADGFRNYRARLDVSTTESLLIDKAQQLTLTAPEMTALVGGMRVLGANFDGSKNGVFTDRVGVLSNDFFVNLLDMRYEWKATDESKELFEGRDRETGEVKFTASRADLVFGSNSVLRAVAEVYASSDAHEKFVKDFVAAWVKVMNLDRFDLL.

A disordered region spans residues 1 to 33 (MSTSDDIHNTTATGKCPFHQGGHDQSAGAGTTT). Residues 105–226 (WHGAGTYRSI…LGATEMGLIY (122 aa)) constitute a cross-link (tryptophyl-tyrosyl-methioninium (Trp-Tyr) (with M-252)). The active-site Proton acceptor is the His106. Residues 226–252 (YVNPEGPDHSGEPLSAAAAIRATFGNM) constitute a cross-link (tryptophyl-tyrosyl-methioninium (Tyr-Met) (with W-105)). His267 is a binding site for heme b.

It belongs to the peroxidase family. Peroxidase/catalase subfamily. As to quaternary structure, homodimer or homotetramer. It depends on heme b as a cofactor. Formation of the three residue Trp-Tyr-Met cross-link is important for the catalase, but not the peroxidase activity of the enzyme.

The catalysed reaction is H2O2 + AH2 = A + 2 H2O. The enzyme catalyses 2 H2O2 = O2 + 2 H2O. Its function is as follows. Bifunctional enzyme with both catalase and broad-spectrum peroxidase activity. This chain is Catalase-peroxidase, found in Escherichia coli (strain K12 / DH10B).